Consider the following 49-residue polypeptide: Large ribosomal subunit protein bL32c (49 aa).

The interval 1 to 23 (MTPKKRKSKSKKNLRKTNWKKKA) is disordered.

It belongs to the bacterial ribosomal protein bL32 family.

It localises to the plastid. It is found in the chloroplast. This Oltmannsiellopsis viridis (Marine flagellate) protein is Large ribosomal subunit protein bL32c.